The chain runs to 450 residues: D-inositol 3-phosphate glycosyltransferase (450 aa).

His-21 lines the 1D-myo-inositol 3-phosphate pocket. UDP-N-acetyl-alpha-D-glucosamine contacts are provided by residues 27–28 and Gly-35; that span reads QP. 1D-myo-inositol 3-phosphate-binding positions include 32 to 37, Lys-90, Tyr-123, Thr-147, and Arg-167; that span reads DAGGMN. Residues Arg-241, Lys-246, and Val-307 each coordinate UDP-N-acetyl-alpha-D-glucosamine. Residues Tyr-316, Arg-317, and Ala-319 each coordinate Mg(2+). Positions 329 and 337 each coordinate UDP-N-acetyl-alpha-D-glucosamine. Mg(2+) is bound at residue Thr-343.

This sequence belongs to the glycosyltransferase group 1 family. MshA subfamily. Homodimer.

The enzyme catalyses 1D-myo-inositol 3-phosphate + UDP-N-acetyl-alpha-D-glucosamine = 1D-myo-inositol 2-acetamido-2-deoxy-alpha-D-glucopyranoside 3-phosphate + UDP + H(+). Functionally, catalyzes the transfer of a N-acetyl-glucosamine moiety to 1D-myo-inositol 3-phosphate to produce 1D-myo-inositol 2-acetamido-2-deoxy-glucopyranoside 3-phosphate in the mycothiol biosynthesis pathway. The protein is D-inositol 3-phosphate glycosyltransferase of Geodermatophilus obscurus (strain ATCC 25078 / DSM 43160 / JCM 3152 / CCUG 61914 / KCC A-0152 / KCTC 9177 / NBRC 13315 / NRRL B-3577 / G-20).